A 99-amino-acid polypeptide reads, in one-letter code: CTP synthase (99 aa).

The Glutamine amidotransferase type-1 domain maps to 1-99 (TMVTKLEKDS…FIKAIIENNK (99 aa)). Arg28 lines the L-glutamine pocket. Catalysis depends on residues His73 and Glu75.

The protein belongs to the CTP synthase family. In terms of assembly, homotetramer.

It carries out the reaction UTP + L-glutamine + ATP + H2O = CTP + L-glutamate + ADP + phosphate + 2 H(+). It catalyses the reaction L-glutamine + H2O = L-glutamate + NH4(+). The enzyme catalyses UTP + NH4(+) + ATP = CTP + ADP + phosphate + 2 H(+). Its pathway is pyrimidine metabolism; CTP biosynthesis via de novo pathway; CTP from UDP: step 2/2. Its activity is regulated as follows. Allosterically activated by GTP, when glutamine is the substrate; GTP has no effect on the reaction when ammonia is the substrate. The allosteric effector GTP functions by stabilizing the protein conformation that binds the tetrahedral intermediate(s) formed during glutamine hydrolysis. Inhibited by the product CTP, via allosteric rather than competitive inhibition. Catalyzes the ATP-dependent amination of UTP to CTP with either L-glutamine or ammonia as the source of nitrogen. Regulates intracellular CTP levels through interactions with the four ribonucleotide triphosphates. In Mycoplasma capricolum subsp. capripneumoniae, this protein is CTP synthase.